Here is a 349-residue protein sequence, read N- to C-terminus: 4-hydroxythreonine-4-phosphate dehydrogenase (349 aa).

Threonine 135 is a substrate binding site. Residues histidine 170, histidine 215, and histidine 276 each contribute to the a divalent metal cation site. Substrate contacts are provided by lysine 284, asparagine 293, and arginine 302.

Belongs to the PdxA family. As to quaternary structure, homodimer. It depends on a divalent metal cation as a cofactor.

It localises to the cytoplasm. It carries out the reaction 4-(phosphooxy)-L-threonine + NAD(+) = 3-amino-2-oxopropyl phosphate + CO2 + NADH. The protein operates within cofactor biosynthesis; pyridoxine 5'-phosphate biosynthesis; pyridoxine 5'-phosphate from D-erythrose 4-phosphate: step 4/5. Catalyzes the NAD(P)-dependent oxidation of 4-(phosphooxy)-L-threonine (HTP) into 2-amino-3-oxo-4-(phosphooxy)butyric acid which spontaneously decarboxylates to form 3-amino-2-oxopropyl phosphate (AHAP). The chain is 4-hydroxythreonine-4-phosphate dehydrogenase from Synechococcus sp. (strain JA-3-3Ab) (Cyanobacteria bacterium Yellowstone A-Prime).